The sequence spans 242 residues: Dehydration-responsive element-binding protein 1J (242 aa).

A compositionally biased stretch (low complexity) spans 20-29 (SSATTAATAT). The tract at residues 20 to 44 (SSATTAATATGPASPKRPAGRTKFQ) is disordered. The segment at residues 50–109 (VFRGVRRRGRAGRWVCEVRVPGSRGDRLWVGTFDTAEEAARAHDAAMLALCGASASLNFA) is a DNA-binding region (AP2/ERF). Residues 143 to 184 (FQRRGSTAATATATSGDAASTAPPSSSPVLSPNDDNASSAST) are disordered. Residues 148–184 (STAATATATSGDAASTAPPSSSPVLSPNDDNASSAST) are compositionally biased toward low complexity.

Belongs to the AP2/ERF transcription factor family. ERF subfamily.

The protein localises to the nucleus. In terms of biological role, transcriptional activator that binds specifically to the DNA sequence 5'-[AG]CCGAC-3'. Binding to the C-repeat/DRE element mediates high salinity- and dehydration-inducible transcription. The sequence is that of Dehydration-responsive element-binding protein 1J (DREB1J) from Oryza sativa subsp. japonica (Rice).